A 253-amino-acid chain; its full sequence is Tryptophan synthase alpha chain (253 aa).

Catalysis depends on proton acceptor residues Glu-47 and Asp-58.

The protein belongs to the TrpA family. As to quaternary structure, tetramer of two alpha and two beta chains.

The catalysed reaction is (1S,2R)-1-C-(indol-3-yl)glycerol 3-phosphate + L-serine = D-glyceraldehyde 3-phosphate + L-tryptophan + H2O. The protein operates within amino-acid biosynthesis; L-tryptophan biosynthesis; L-tryptophan from chorismate: step 5/5. In terms of biological role, the alpha subunit is responsible for the aldol cleavage of indoleglycerol phosphate to indole and glyceraldehyde 3-phosphate. This Lactococcus lactis subsp. cremoris (strain SK11) protein is Tryptophan synthase alpha chain.